We begin with the raw amino-acid sequence, 370 residues long: Asporin (370 aa).

Residues 1–15 (MKVYVLLVFLTLCSA) form the signal peptide. The O-linked (GalNAc...) serine glycan is linked to serine 45. The LRRNT domain occupies 56–92 (FFPFDLFSTCPFGCQCYSRVVHCSDLGLSSVPSNIPF). Disulfide bonds link cysteine 65-cysteine 71 and cysteine 69-cysteine 78. 11 LRR repeats span residues 93 to 114 (DTRMVDLQNNKIKEIKENDFKG), 117 to 138 (SLYALILNNNKLTKIHPKAFLT), 141 to 163 (KLRRLYLSHNQLSEIPLNLPKSL), 164 to 183 (AELRIHDNKVKKIQKATFKG), 186 to 209 (ALHVLEMSANPLDNNGIEPGAFEG), 232 to 253 (TLLELHLDYNKISVVELEDFKR), 256 to 277 (DLQRLGLGNNRITDIENGSLAN), 280 to 302 (RVREIHLENNKLKKVPSGLQELK), 303 to 324 (YLQIIFLHSNSITKVGVNDFCP), 332 to 354 (SLYSAISLSNNPVKYWEVQPATF), and 355 to 370 (RCVLSRMSVQLGNFRK). A glycan (N-linked (GlcNAc...) asparagine) is linked at asparagine 272. A disulfide bridge links cysteine 323 with cysteine 356.

The protein belongs to the small leucine-rich proteoglycan (SLRP) family. SLRP class I subfamily.

The protein resides in the secreted. It localises to the extracellular space. Its subcellular location is the extracellular matrix. The sequence is that of Asporin (ASPN) from Bos taurus (Bovine).